The sequence spans 352 residues: CMP-sialic acid transporter 4 (352 aa).

Over 1-51 (MEYRKIKDEDDHDVASDIESVKGKSHTVASSNIAMATLGVGSSERINWKRK) the chain is Cytoplasmic. The helical transmembrane segment at 52–72 (GVVTCALTILTSSQAILIVWS) threads the bilayer. At 73–81 (KRAGKYEYS) the chain is on the lumenal side. A helical membrane pass occupies residues 82 to 102 (VTTANFLVGTLKCALSLLALT). The Cytoplasmic portion of the chain corresponds to 103–124 (RIWKNEGVTDDNRLSTTFDEVK). Residues 125-145 (VFPIPAALYLFKNLLQYYIFA) traverse the membrane as a helical segment. At 146-174 (YVDAPGYQILKNLNIISTGVLYRIILKRK) the chain is on the lumenal side. A helical membrane pass occupies residues 175 to 195 (LSEIQWAGFILLCCGCTTAQL). Topologically, residues 196-210 (NSNSDRVLQTSLPGW) are cytoplasmic. Residues 211-231 (TMAIVMALLSGFAGVYTEAII) form a helical membrane-spanning segment. Residues 232-238 (KKRPSRN) are Lumenal-facing. The helical transmembrane segment at 239–259 (INVQNFWLYVFGMAFNAVAIV) threads the bilayer. The Cytoplasmic segment spans residues 260–276 (IQDFDAVANKGFFHGYS). A helical transmembrane segment spans residues 277 to 297 (FITLLMILNHALSGIAVSMVM). Residues 298–313 (KYADNIVKVYSTSVAM) are Lumenal-facing. A helical membrane pass occupies residues 314–334 (LLTAVVSVFLFNFHLSLAFFL). Residues 335 to 352 (GSTVVSVSVYLHSAGKLR) are Cytoplasmic-facing.

This sequence belongs to the nucleotide-sugar transporter family. CMP-Sialate:CMP antiporter (TC 2.A.7.12) subfamily.

The protein localises to the golgi apparatus membrane. Its function is as follows. Sugar transporter involved in the transport of CMP-sialic acid from the cytoplasm into the Golgi. Essential protein. The polypeptide is CMP-sialic acid transporter 4 (Arabidopsis thaliana (Mouse-ear cress)).